A 708-amino-acid polypeptide reads, in one-letter code: Glycine--tRNA ligase beta subunit (708 aa).

The protein belongs to the class-II aminoacyl-tRNA synthetase family. Tetramer of two alpha and two beta subunits.

The protein localises to the cytoplasm. The enzyme catalyses tRNA(Gly) + glycine + ATP = glycyl-tRNA(Gly) + AMP + diphosphate. This is Glycine--tRNA ligase beta subunit from Paracidovorax citrulli (strain AAC00-1) (Acidovorax citrulli).